Consider the following 368-residue polypeptide: Putative transport protein bbp_117 (368 aa).

Transmembrane regions (helical) follow at residues 13–35 (VIFS…RPFF), 39–61 (AWAS…LLWG), 68–90 (VMMT…NSLI), 159–181 (HFGR…YWNG), 216–238 (LGVV…ISGI), 248–270 (IIIF…IWLY), 277–299 (WGTV…RPIL), and 314–336 (GVIG…VLII).

Belongs to the autoinducer-2 exporter (AI-2E) (TC 2.A.86) family.

The protein localises to the cell membrane. This is Putative transport protein bbp_117 from Buchnera aphidicola subsp. Baizongia pistaciae (strain Bp).